Consider the following 148-residue polypeptide: Methylglyoxal synthase (148 aa).

Residues 4–148 enclose the MGS-like domain; that stretch reads VSVPAIKRIV…LSYNTKVKKD (145 aa). Residues His17, Lys21, 43–46, and 63–64 contribute to the substrate site; these read TGTT and SG. Catalysis depends on Asp69, which acts as the Proton donor/acceptor. His96 is a binding site for substrate.

It belongs to the methylglyoxal synthase family.

The catalysed reaction is dihydroxyacetone phosphate = methylglyoxal + phosphate. Functionally, catalyzes the formation of methylglyoxal from dihydroxyacetone phosphate. This Leptospira interrogans serogroup Icterohaemorrhagiae serovar copenhageni (strain Fiocruz L1-130) protein is Methylglyoxal synthase.